We begin with the raw amino-acid sequence, 175 residues long: Gamma-crystallin B (175 aa).

2 Beta/gamma crystallin 'Greek key' domains span residues 2–40 (GKIT…RVES) and 41–83 (GCWM…HLIP). Residues 84 to 88 (PHSGT) form a connecting peptide region. Beta/gamma crystallin 'Greek key' domains are found at residues 89–129 (YRMK…NVLE) and 130–172 (GSWI…RRVM).

It belongs to the beta/gamma-crystallin family. Monomer.

Crystallins are the dominant structural components of the vertebrate eye lens. This chain is Gamma-crystallin B (CRYGB), found in Macaca mulatta (Rhesus macaque).